The following is a 90-amino-acid chain: Small ribosomal subunit protein uS17 (90 aa).

This sequence belongs to the universal ribosomal protein uS17 family. As to quaternary structure, part of the 30S ribosomal subunit.

In terms of biological role, one of the primary rRNA binding proteins, it binds specifically to the 5'-end of 16S ribosomal RNA. The polypeptide is Small ribosomal subunit protein uS17 (Paraburkholderia phymatum (strain DSM 17167 / CIP 108236 / LMG 21445 / STM815) (Burkholderia phymatum)).